Consider the following 192-residue polypeptide: Inosine triphosphate pyrophosphatase (192 aa).

10–15 contacts ITP; the sequence is TGNANK. Glu46 is a binding site for Mg(2+). ITP contacts are provided by residues Lys58, 74–75, Lys91, 149–152, Lys172, and 177–178; these read DT, FGWD, and HR.

The protein belongs to the HAM1 NTPase family. In terms of assembly, homodimer. Mg(2+) serves as cofactor. It depends on Mn(2+) as a cofactor.

The protein localises to the cytoplasm. It localises to the nucleus. The catalysed reaction is ITP + H2O = IMP + diphosphate + H(+). It catalyses the reaction dITP + H2O = dIMP + diphosphate + H(+). It carries out the reaction XTP + H2O = XMP + diphosphate + H(+). Pyrophosphatase that hydrolyzes non-canonical purine nucleotides such as inosine triphosphate (ITP), deoxyinosine triphosphate (dITP) or xanthosine 5'-triphosphate (XTP) to their respective monophosphate derivatives. The enzyme does not distinguish between the deoxy- and ribose forms. Probably excludes non-canonical purines from RNA and DNA precursor pools, thus preventing their incorporation into RNA and DNA and avoiding chromosomal lesions. This Puccinia graminis f. sp. tritici (strain CRL 75-36-700-3 / race SCCL) (Black stem rust fungus) protein is Inosine triphosphate pyrophosphatase.